Here is a 532-residue protein sequence, read N- to C-terminus: tRNA-2-methylthio-N(6)-dimethylallyladenosine synthase (532 aa).

The interval methionine 1–methionine 21 is disordered. Residues arginine 24–histidine 140 enclose the MTTase N-terminal domain. 6 residues coordinate [4Fe-4S] cluster: cysteine 33, cysteine 69, cysteine 103, cysteine 177, cysteine 181, and cysteine 184. The 237-residue stretch at arginine 163–glutamate 399 folds into the Radical SAM core domain. Residues arginine 402–isoleucine 470 enclose the TRAM domain. Residues threonine 510 to glutamine 532 form a disordered region. The span at glycine 523 to glutamine 532 shows a compositional bias: low complexity.

Belongs to the methylthiotransferase family. MiaB subfamily. In terms of assembly, monomer. It depends on [4Fe-4S] cluster as a cofactor.

The protein resides in the cytoplasm. It catalyses the reaction N(6)-dimethylallyladenosine(37) in tRNA + (sulfur carrier)-SH + AH2 + 2 S-adenosyl-L-methionine = 2-methylsulfanyl-N(6)-dimethylallyladenosine(37) in tRNA + (sulfur carrier)-H + 5'-deoxyadenosine + L-methionine + A + S-adenosyl-L-homocysteine + 2 H(+). Functionally, catalyzes the methylthiolation of N6-(dimethylallyl)adenosine (i(6)A), leading to the formation of 2-methylthio-N6-(dimethylallyl)adenosine (ms(2)i(6)A) at position 37 in tRNAs that read codons beginning with uridine. This Mycobacterium ulcerans (strain Agy99) protein is tRNA-2-methylthio-N(6)-dimethylallyladenosine synthase.